A 109-amino-acid chain; its full sequence is Large ribosomal subunit protein uL22 (109 aa).

The protein belongs to the universal ribosomal protein uL22 family. Part of the 50S ribosomal subunit.

In terms of biological role, this protein binds specifically to 23S rRNA; its binding is stimulated by other ribosomal proteins, e.g. L4, L17, and L20. It is important during the early stages of 50S assembly. It makes multiple contacts with different domains of the 23S rRNA in the assembled 50S subunit and ribosome. Its function is as follows. The globular domain of the protein is located near the polypeptide exit tunnel on the outside of the subunit, while an extended beta-hairpin is found that lines the wall of the exit tunnel in the center of the 70S ribosome. This Chromobacterium violaceum (strain ATCC 12472 / DSM 30191 / JCM 1249 / CCUG 213 / NBRC 12614 / NCIMB 9131 / NCTC 9757 / MK) protein is Large ribosomal subunit protein uL22.